Here is a 188-residue protein sequence, read N- to C-terminus: dCTP deaminase (188 aa).

DCTP-binding positions include 111-116 (KSTYAR), 135-137 (TLE), Gln-156, Tyr-170, and Gln-180. Glu-137 acts as the Proton donor/acceptor in catalysis.

It belongs to the dCTP deaminase family. In terms of assembly, homotrimer.

It carries out the reaction dCTP + H2O + H(+) = dUTP + NH4(+). It functions in the pathway pyrimidine metabolism; dUMP biosynthesis; dUMP from dCTP (dUTP route): step 1/2. Functionally, catalyzes the deamination of dCTP to dUTP. This chain is dCTP deaminase, found in Neisseria meningitidis serogroup C / serotype 2a (strain ATCC 700532 / DSM 15464 / FAM18).